The primary structure comprises 770 residues: Glutamate carboxypeptidase 2 homolog (770 aa).

The Cytoplasmic portion of the chain corresponds to Met1–Pro19. The helical; Signal-anchor for type II membrane protein transmembrane segment at Met20–Leu40 threads the bilayer. Topologically, residues Gly41 to Ile770 are extracellular. N-linked (GlcNAc...) asparagine glycans are attached at residues Asn175 and Asn337. Positions Ser282–Phe597 are catalytic. Positions 387 and 397 each coordinate Zn(2+). An N-linked (GlcNAc...) asparagine glycan is attached at Asn417. Glu435 (nucleophile) is an active-site residue. Positions 436 and 464 each coordinate Zn(2+). Residues Asn469 and Asn551 are each glycosylated (N-linked (GlcNAc...) asparagine). His562 lines the Zn(2+) pocket. N-linked (GlcNAc...) asparagine glycans are attached at residues Asn606 and Asn630.

It belongs to the peptidase M28 family. M28B subfamily. The cofactor is Zn(2+).

It is found in the membrane. The catalysed reaction is Release of an unsubstituted, C-terminal glutamyl residue, typically from Ac-Asp-Glu or folylpoly-gamma-glutamates.. This chain is Glutamate carboxypeptidase 2 homolog, found in Caenorhabditis briggsae.